The sequence spans 239 residues: Probable transcriptional regulator ycf27 (239 aa).

Residues 7–120 (KILVVDDEIS…ELEARIRSLL (114 aa)) form the Response regulatory domain. The residue at position 56 (Asp56) is a 4-aspartylphosphate. Residues 76-94 (DIPIIMLTALGDVADRITG) constitute a DNA-binding region (H-T-H motif). The ompR/PhoB-type DNA-binding region spans 135–236 (GENLQIGFLK…ARGIGYLFQN (102 aa)).

The protein resides in the plastid. It localises to the cyanelle. Functionally, probable promoter-specific protein mediating the interaction between DNA and RNA polymerase. The chain is Probable transcriptional regulator ycf27 (ycf27) from Cyanophora paradoxa.